The following is a 364-amino-acid chain: Dihydroorotate dehydrogenase (quinone) (364 aa).

FMN-binding positions include 61–65 and Thr-85; that span reads AGFDK. Lys-65 contacts substrate. 110-114 serves as a coordination point for substrate; the sequence is NRMGF. Positions 139 and 170 each coordinate FMN. Residue Asn-170 participates in substrate binding. Residue Ser-173 is the Nucleophile of the active site. Asn-175 is a substrate binding site. Lys-214 and Ala-242 together coordinate FMN. 243 to 244 lines the substrate pocket; it reads NT. FMN contacts are provided by residues Gly-266, Gly-295, and 316 to 317; that span reads YS.

It belongs to the dihydroorotate dehydrogenase family. Type 2 subfamily. As to quaternary structure, monomer. The cofactor is FMN.

The protein localises to the cell membrane. It catalyses the reaction (S)-dihydroorotate + a quinone = orotate + a quinol. It functions in the pathway pyrimidine metabolism; UMP biosynthesis via de novo pathway; orotate from (S)-dihydroorotate (quinone route): step 1/1. In terms of biological role, catalyzes the conversion of dihydroorotate to orotate with quinone as electron acceptor. The polypeptide is Dihydroorotate dehydrogenase (quinone) (Rhodopseudomonas palustris (strain HaA2)).